Reading from the N-terminus, the 66-residue chain is Large ribosomal subunit protein uL29 (66 aa).

Belongs to the universal ribosomal protein uL29 family.

The chain is Large ribosomal subunit protein uL29 from Brucella abortus (strain S19).